A 447-amino-acid polypeptide reads, in one-letter code: Serine/threonine-protein phosphatase 2A 55 kDa regulatory subunit B delta isoform (447 aa).

7 WD repeats span residues 26 to 65, 91 to 132, 175 to 213, 224 to 264, 283 to 321, 338 to 379, and 414 to 447; these read AEAD…KSRP, EIEE…KRVE, AHTY…RSFN, ELTE…LCDR, EIIS…RPVE, ENDC…DITL, and DFNK…DKVN.

This sequence belongs to the phosphatase 2A regulatory subunit B family. As to quaternary structure, PP2A consists of a common heterodimeric core enzyme, composed of a 36 kDa catalytic subunit (subunit C) and a 65 kDa constant regulatory subunit (PR65 or subunit A), that associates with a variety of regulatory subunits. Proteins that associate with the core dimer include three families of regulatory subunits B (the R2/B/PR55/B55, R3/B''/PR72/PR130/PR59 and R5/B'/B56 families), the 48 kDa variable regulatory subunit, viral proteins, and cell signaling molecules. Interacts with ensa (when phosphorylated at 'Ser-67') and arpp19 (when phosphorylated at 'Ser-67'), leading to inhibit PP2A activity.

It is found in the cytoplasm. Functionally, substrate-recognition subunit of protein phosphatase 2A (PP2A) that plays a key role in cell cycle by controlling mitosis entry and exit. The activity of PP2A complexes containing ppp2r2d (PR55-delta) fluctuate during the cell cycle: the activity is high in interphase and low in mitosis. During mitosis, activity of PP2A is inhibited via interaction with phosphorylated ensa and arpp19 inhibitors. PP2A complexes containing ppp2r2d (PR55-delta) also regulate the activity of TGF-beta/Activin/Nodal signaling by restricting receptor activity. Within the PP2A complexes, the B regulatory subunits modulate substrate selectivity and catalytic activity, and may also direct the localization of the catalytic enzyme to a particular subcellular compartment. The protein is Serine/threonine-protein phosphatase 2A 55 kDa regulatory subunit B delta isoform (ppp2r2d) of Xenopus tropicalis (Western clawed frog).